Consider the following 469-residue polypeptide: Mitochondrial-processing peptidase subunit beta (469 aa).

H78 serves as a coordination point for Zn(2+). The active-site Proton acceptor is the E81. Zn(2+) is bound by residues H82 and E159.

It belongs to the peptidase M16 family. Heterodimer of alpha and beta subunits, forming the mitochondrial processing protease (MPP) in which subunit alpha is involved in substrate recognition and binding and subunit beta is the catalytic subunit. mppB is probably also part of the cytochrome bc1 complex as a core I protein in the mitochondrial inner membrane. Zn(2+) serves as cofactor.

The protein resides in the mitochondrion inner membrane. It is found in the mitochondrion matrix. It carries out the reaction Release of N-terminal transit peptides from precursor proteins imported into the mitochondrion, typically with Arg in position P2.. Its activity is regulated as follows. Binding to alpha subunit is required for catalytic activity. Functionally, catalytic subunit of the essential mitochondrial processing protease (MPP), which cleaves the mitochondrial sequence off newly imported precursors proteins. Preferentially, cleaves after an arginine at position P2. Plays an essential role in mitochondrial biogenesis. The chain is Mitochondrial-processing peptidase subunit beta (mppB) from Dictyostelium discoideum (Social amoeba).